A 70-amino-acid chain; its full sequence is Small ribosomal subunit protein bS21B (70 aa).

Residues 37 to 70 (SYEKPTTERKRKKAAAVARLRKQVRRSMPPKKKY) form a disordered region. A compositionally biased stretch (basic residues) spans 45 to 70 (RKRKKAAAVARLRKQVRRSMPPKKKY).

It belongs to the bacterial ribosomal protein bS21 family.

The chain is Small ribosomal subunit protein bS21B from Burkholderia pseudomallei (strain K96243).